Reading from the N-terminus, the 323-residue chain is Probable cell division protein WhiA (323 aa).

Positions threonine 275–serine 309 form a DNA-binding region, H-T-H motif.

Belongs to the WhiA family.

Involved in cell division and chromosome segregation. The protein is Probable cell division protein WhiA of Listeria monocytogenes serotype 4a (strain HCC23).